Reading from the N-terminus, the 1025-residue chain is Leucyl-cystinyl aminopeptidase (1025 aa).

Met1 carries the post-translational modification N-acetylmethionine. Over 1–110 (MEPFTNDRLQ…GACSVPSART (110 aa)) the chain is Cytoplasmic. Positions 53–54 (LL) match the Dileucine internalization motif motif. Position 70 is a phosphotyrosine (Tyr70). The Dileucine internalization motif motif lies at 76 to 77 (LL). Phosphoserine occurs at positions 80 and 91. The segment at 96–101 (RQSPDG) is tankyrase binding. A helical; Signal-anchor for type II membrane protein membrane pass occupies residues 111–131 (MVVCAFVIVVAVSVIMVIYLL). At 132-1025 (PRCTFTKEGC…KNLKSLTWWL (894 aa)) the chain is on the extracellular side. Asn145, Asn184, Asn215, Asn256, and Asn266 each carry an N-linked (GlcNAc...) asparagine glycan. Glu295 provides a ligand contact to substrate. N-linked (GlcNAc...) asparagine glycans are attached at residues Asn368 and Asn374. 428–432 (GAMEN) serves as a coordination point for substrate. A glycan (N-linked (GlcNAc...) asparagine) is linked at Asn448. His464 provides a ligand contact to Zn(2+). Glu465 serves as the catalytic Proton acceptor. Zn(2+) is bound by residues His468 and Glu487. N-linked (GlcNAc...) asparagine glycans are attached at residues Asn525, Asn578, Asn598, Asn664, Asn682, Asn760, Asn834, Asn850, and Asn989.

The protein belongs to the peptidase M1 family. Homodimer. Binds tankyrases 1 and 2. Zn(2+) serves as cofactor. Post-translationally, the pregnancy serum form is derived from the membrane-bound form by proteolytic processing. In terms of processing, N-glycosylated. As to expression, highly expressed in placenta, heart, kidney and small intestine. Detected at lower levels in neuronal cells in the brain, in skeletal muscle, spleen, liver, testes and colon.

The protein resides in the cell membrane. Its subcellular location is the secreted. It carries out the reaction Release of an N-terminal amino acid, Cys-|-Xaa-, in which the half-cystine residue is involved in a disulfide loop, notably in oxytocin or vasopressin. Hydrolysis rates on a range of aminoacyl arylamides exceed that for the cystinyl derivative, however.. Its function is as follows. Release of an N-terminal amino acid, cleaves before cysteine, leucine as well as other amino acids. Degrades peptide hormones such as oxytocin, vasopressin and angiotensin III, and plays a role in maintaining homeostasis during pregnancy. May be involved in the inactivation of neuronal peptides in the brain. Cleaves Met-enkephalin and dynorphin. Binds angiotensin IV and may be the angiotensin IV receptor in the brain. The sequence is that of Leucyl-cystinyl aminopeptidase (LNPEP) from Homo sapiens (Human).